The primary structure comprises 219 residues: Chalcone--flavanone isomerase (219 aa).

Residues Thr50, Asn115, and Ser192 each coordinate substrate.

It belongs to the chalcone isomerase family.

It catalyses the reaction a chalcone = a flavanone.. Its pathway is secondary metabolite biosynthesis; flavonoid biosynthesis. Catalyzes the intramolecular cyclization of bicyclic chalcones into tricyclic (S)-flavanones. Responsible for the isomerization of 4,2',4',6'-tetrahydroxychalcone (also termed chalcone) into naringenin. In Pyrus communis (Pear), this protein is Chalcone--flavanone isomerase (CHI).